The sequence spans 256 residues: F-actin-capping protein subunit beta (256 aa).

Position 1 is an N-acetylmethionine (Met1).

The protein belongs to the F-actin-capping protein beta subunit family. Component of the F-actin capping complex, composed of a heterodimer of an alpha and a beta subunit.

The protein localises to the cytoplasm. The protein resides in the cytoskeleton. Its function is as follows. F-actin-capping proteins bind in a Ca(2+)-independent manner to the fast growing ends of actin filaments (barbed end) thereby blocking the exchange of subunits at these ends. Unlike other capping proteins (such as gelsolin and severin), these proteins do not sever actin filaments. The sequence is that of F-actin-capping protein subunit beta from Arabidopsis thaliana (Mouse-ear cress).